Reading from the N-terminus, the 246-residue chain is Predicted GPI-anchored protein 33 (246 aa).

An N-terminal signal peptide occupies residues 1 to 16 (MRGIILLSFVLTSCLA). N-linked (GlcNAc...) asparagine glycosylation is present at Asn-214. Asn-219 carries the GPI-anchor amidated asparagine lipid modification. A propeptide spans 220–246 (AAGVYSTNSVLVFVSICIGFIGGSLGI) (removed in mature form).

It is found in the cell membrane. In Candida albicans (strain SC5314 / ATCC MYA-2876) (Yeast), this protein is Predicted GPI-anchored protein 33 (PGA33).